Reading from the N-terminus, the 313-residue chain is Endo-beta-N-acetylglucosaminidase H (313 aa).

The segment at residues 1–42 (MFTPVRRRVRTAALALSAAAALVLGSTAASGASATPSPAPAP) is a signal peptide (or 44). One can recognise a GH18 domain in the interval 51–307 (PTSVAYVEVN…SAFTRELYGS (257 aa)). The active-site Proton donor is the Glu174.

This sequence belongs to the glycosyl hydrolase 18 family.

The enzyme catalyses an N(4)-(oligosaccharide-(1-&gt;3)-[oligosaccharide-(1-&gt;6)]-beta-D-Man-(1-&gt;4)-beta-D-GlcNAc-(1-&gt;4)-alpha-D-GlcNAc)-L-asparaginyl-[protein] + H2O = an oligosaccharide-(1-&gt;3)-[oligosaccharide-(1-&gt;6)]-beta-D-Man-(1-&gt;4)-D-GlcNAc + N(4)-(N-acetyl-beta-D-glucosaminyl)-L-asparaginyl-[protein]. Functionally, cleaves asparagine-linked oligomannose and hybrid, but not complex, oligosaccharides from glycoproteins. This chain is Endo-beta-N-acetylglucosaminidase H, found in Streptomyces plicatus.